The sequence spans 472 residues: Serine/threonine-protein kinase sax-1 (472 aa).

Residues 87–381 enclose the Protein kinase domain; that stretch reads FESLKVIGRG…LDEIKQCPFF (295 aa). ATP contacts are provided by residues 93–101 and Lys116; that span reads IGRGAFGEV. The active-site Proton acceptor is the Asp210. The AGC-kinase C-terminal domain occupies 382–452; that stretch reads RRIDWNHIRE…KRFDGLTQKM (71 aa).

This sequence belongs to the protein kinase superfamily. AGC Ser/Thr protein kinase family. Requires Mg(2+) as cofactor.

Its subcellular location is the cytoplasm. It localises to the nucleus. The enzyme catalyses L-seryl-[protein] + ATP = O-phospho-L-seryl-[protein] + ADP + H(+). It catalyses the reaction L-threonyl-[protein] + ATP = O-phospho-L-threonyl-[protein] + ADP + H(+). In terms of biological role, acts with sax-2 to restrict the growth of both primary and secondary neurites. Regulates mechanosensory tiling by controlling the termination point of sensory dendrites. This chain is Serine/threonine-protein kinase sax-1, found in Caenorhabditis briggsae.